A 1171-amino-acid chain; its full sequence is DNA-directed RNA polymerase subunit beta' (1171 aa).

Zn(2+) contacts are provided by cysteine 60, cysteine 62, cysteine 75, and cysteine 78. Residues 299–319 (GRRGKPVTGPGNRPLKSLSDM) form a disordered region. Aspartate 449, aspartate 451, and aspartate 453 together coordinate Mg(2+). 4 residues coordinate Zn(2+): cysteine 790, cysteine 864, cysteine 871, and cysteine 874.

Belongs to the RNA polymerase beta' chain family. In terms of assembly, the RNAP catalytic core consists of 2 alpha, 1 beta, 1 beta' and 1 omega subunit. When a sigma factor is associated with the core the holoenzyme is formed, which can initiate transcription. Mg(2+) is required as a cofactor. Zn(2+) serves as cofactor.

The catalysed reaction is RNA(n) + a ribonucleoside 5'-triphosphate = RNA(n+1) + diphosphate. Functionally, DNA-dependent RNA polymerase catalyzes the transcription of DNA into RNA using the four ribonucleoside triphosphates as substrates. This is DNA-directed RNA polymerase subunit beta' from Alkaliphilus metalliredigens (strain QYMF).